A 407-amino-acid polypeptide reads, in one-letter code: Chorismate synthase (407 aa).

NADP(+) is bound by residues R40 and R46. FMN contacts are provided by residues 138–140 and 259–260; these read RAS and QA. Residues 275 to 284 show a composition bias toward basic and acidic residues; that stretch reads RRGSRAHDEM. A disordered region spans residues 275-308; the sequence is RRGSRAHDEMYPGTDGVVRSTNRAGGLEGGMTNG. Residues G303, 318–322, and R344 contribute to the FMN site; that span reads KPIST.

The protein belongs to the chorismate synthase family. Homotetramer. The cofactor is FMNH2.

The enzyme catalyses 5-O-(1-carboxyvinyl)-3-phosphoshikimate = chorismate + phosphate. It participates in metabolic intermediate biosynthesis; chorismate biosynthesis; chorismate from D-erythrose 4-phosphate and phosphoenolpyruvate: step 7/7. Its function is as follows. Catalyzes the anti-1,4-elimination of the C-3 phosphate and the C-6 proR hydrogen from 5-enolpyruvylshikimate-3-phosphate (EPSP) to yield chorismate, which is the branch point compound that serves as the starting substrate for the three terminal pathways of aromatic amino acid biosynthesis. This reaction introduces a second double bond into the aromatic ring system. This chain is Chorismate synthase, found in Mycobacterium ulcerans (strain Agy99).